The chain runs to 488 residues: Bifunctional protein NifU/MnmA (488 aa).

Residues 1–130 (MPERYGPRVI…DYWSRQGDAL (130 aa)) form a nifU-like protein region. A tRNA-specific 2-thiouridylase MnmA region spans residues 143–488 (RRGVVAAMSG…GGGIIARRDA (346 aa)). ATP is bound by residues 149 to 156 (AMSGGVDS) and F175. The active-site Nucleophile is C240. A disulfide bridge links C240 with C333. Residue G264 participates in ATP binding. The interaction with tRNA stretch occupies residues 283–285 (KDQ). C333 acts as the Cysteine persulfide intermediate in catalysis. The interaction with tRNA stretch occupies residues 433–434 (RY).

It in the N-terminal section; belongs to the NifU family. In the C-terminal section; belongs to the MnmA/TRMU family.

Its subcellular location is the cytoplasm. It catalyses the reaction S-sulfanyl-L-cysteinyl-[protein] + uridine(34) in tRNA + AH2 + ATP = 2-thiouridine(34) in tRNA + L-cysteinyl-[protein] + A + AMP + diphosphate + H(+). Its function is as follows. May be involved in the formation or repair of [Fe-S] clusters present in iron-sulfur proteins. Functionally, catalyzes the 2-thiolation of uridine at the wobble position (U34) of tRNA, leading to the formation of s(2)U34. This chain is Bifunctional protein NifU/MnmA (nifU/mnmA), found in Rubrobacter xylanophilus (strain DSM 9941 / JCM 11954 / NBRC 16129 / PRD-1).